The sequence spans 219 residues: ATP-dependent dethiobiotin synthetase BioD (219 aa).

ATP is bound at residue 12 to 17 (EVGKTY). Position 16 (T16) interacts with Mg(2+). K37 is a catalytic residue. S41 is a substrate binding site. ATP-binding positions include D52, 114–117 (EGAG), and 174–175 (NC). D52 and E114 together coordinate Mg(2+).

This sequence belongs to the dethiobiotin synthetase family. In terms of assembly, homodimer. The cofactor is Mg(2+).

Its subcellular location is the cytoplasm. The catalysed reaction is (7R,8S)-7,8-diammoniononanoate + CO2 + ATP = (4R,5S)-dethiobiotin + ADP + phosphate + 3 H(+). Its pathway is cofactor biosynthesis; biotin biosynthesis; biotin from 7,8-diaminononanoate: step 1/2. Catalyzes a mechanistically unusual reaction, the ATP-dependent insertion of CO2 between the N7 and N8 nitrogen atoms of 7,8-diaminopelargonic acid (DAPA, also called 7,8-diammoniononanoate) to form a ureido ring. In Francisella tularensis subsp. holarctica (strain FTNF002-00 / FTA), this protein is ATP-dependent dethiobiotin synthetase BioD.